The chain runs to 124 residues: MSDDIKKYLDGLLQKVSGLYVIQITDRDGVPLLRVSQEKNVDFALMPSFIPTFTTACDQASKLGLGRNKTIISMYSNYQVVQMNKLPLILTFVGAENCNTGHILALEHQVDGYLEDIKQAVTEA.

This sequence belongs to the LAMTOR3 family. In terms of assembly, part of the Ragulator complex composed of Lamtor3, Lamtor2, CG14184, CG14812, and Lamtor4.

In terms of biological role, regulator of the TOR pathway, a signaling cascade that promotes cell growth in response to growth factors, energy levels, and amino acids. As part of the Ragulator complex, may activate the TOR signaling cascade in response to amino acids. In Drosophila melanogaster (Fruit fly), this protein is Ragulator complex protein LAMTOR3 homolog.